The sequence spans 332 residues: NADH-quinone oxidoreductase subunit H (332 aa).

9 helical membrane passes run 16–36 (VFFGLGALLLLVVLGFVTYAI), 87–107 (YVLAPIIAFTPSFMVLAALPF), 116–136 (IGVGLLYYIAVSGLTTIGVVT), 164–184 (LVMSALGVVLLAGSMNLVDIV), 190–210 (VWFIFAQPLAFLIFFIAAVAE), 231–251 (VEYSGFRWAFFMLAEYVYLFA), 253–273 (AALITILFLGGWHPVAFLGWI), 277–297 (VWFALKFCAIVYVLIWFRATF), and 312–332 (VLLPLSLVNIVLTAVIKSLFF).

Belongs to the complex I subunit 1 family. NDH-1 is composed of 14 different subunits. Subunits NuoA, H, J, K, L, M, N constitute the membrane sector of the complex.

The protein localises to the cell membrane. The enzyme catalyses a quinone + NADH + 5 H(+)(in) = a quinol + NAD(+) + 4 H(+)(out). Its function is as follows. NDH-1 shuttles electrons from NADH, via FMN and iron-sulfur (Fe-S) centers, to quinones in the respiratory chain. The immediate electron acceptor for the enzyme in this species is believed to be ubiquinone. Couples the redox reaction to proton translocation (for every two electrons transferred, four hydrogen ions are translocated across the cytoplasmic membrane), and thus conserves the redox energy in a proton gradient. This subunit may bind ubiquinone. This Geobacillus thermodenitrificans (strain NG80-2) protein is NADH-quinone oxidoreductase subunit H.